Consider the following 576-residue polypeptide: Arginine--tRNA ligase (576 aa).

Positions 122-132 match the 'HIGH' region motif; it reads PNVAKEMHVGH.

It belongs to the class-I aminoacyl-tRNA synthetase family. In terms of assembly, monomer.

It localises to the cytoplasm. The enzyme catalyses tRNA(Arg) + L-arginine + ATP = L-arginyl-tRNA(Arg) + AMP + diphosphate. The sequence is that of Arginine--tRNA ligase from Sodalis glossinidius (strain morsitans).